A 702-amino-acid chain; its full sequence is Polyribonucleotide nucleotidyltransferase (702 aa).

Mg(2+) contacts are provided by D485 and D491. Residues 552 to 612 enclose the KH domain; it reads PRTEIICIDP…EGVKKAISII (61 aa). Residues 622 to 690 enclose the S1 motif domain; that stretch reads GEIYLGKVTK…NQGRINLSRK (69 aa).

It belongs to the polyribonucleotide nucleotidyltransferase family. Requires Mg(2+) as cofactor.

It localises to the cytoplasm. It catalyses the reaction RNA(n+1) + phosphate = RNA(n) + a ribonucleoside 5'-diphosphate. Functionally, involved in mRNA degradation. Catalyzes the phosphorolysis of single-stranded polyribonucleotides processively in the 3'- to 5'-direction. In Clostridium botulinum (strain Loch Maree / Type A3), this protein is Polyribonucleotide nucleotidyltransferase.